Consider the following 1083-residue polypeptide: Ubiquitin-protein ligase E3C (1083 aa).

Basic and acidic residues-rich tracts occupy residues 1–10 and 20–40; these read MFSFEGDFKT and SRKE…RKRE. The interval 1 to 40 is disordered; the sequence is MFSFEGDFKTRPKVSLGGASRKEEKASLLHRTQEERRKRE. The interval 1–60 is cis-determinant of acceptor ubiquitin-binding; that stretch reads MFSFEGDFKTRPKVSLGGASRKEEKASLLHRTQEERRKREEERRRLKNAIIIQSFIRGYR. The region spanning 45-74 is the IQ domain; the sequence is RLKNAIIIQSFIRGYRDRKQQYSIQRSAFD. Positions 355–385 are disordered; sequence SPASASCHDSASDSEEESEEADKPSSPEDGR. Residues 375-385 show a composition bias toward basic and acidic residues; the sequence is ADKPSSPEDGR. The HECT domain occupies 744–1083; that stretch reads NEPDLKKRIR…IECAAGFELS (340 aa). A Glycyl lysine isopeptide (Lys-Gly) (interchain with G-Cter in ubiquitin); by autocatalysis cross-link involves residue lysine 903. Catalysis depends on cysteine 1051, which acts as the Glycyl thioester intermediate.

It belongs to the UBE3C family. Interacts with 26S proteasomes. Interacts (via the HECT domain) with UBE2D1 and, less efficiently, with UBE2L3. Autoubiquitinated; promoting its own degradation. As to expression, highly expressed in skeletal muscle. Detected at much lower levels in kidney and pancreas.

The enzyme catalyses S-ubiquitinyl-[E2 ubiquitin-conjugating enzyme]-L-cysteine + [acceptor protein]-L-lysine = [E2 ubiquitin-conjugating enzyme]-L-cysteine + N(6)-ubiquitinyl-[acceptor protein]-L-lysine.. Its pathway is protein modification; protein ubiquitination. Functionally, E3 ubiquitin-protein ligase that specifically catalyzes 'Lys-29'- and 'Lys-48'-linked polyubiquitin chains. Accepts ubiquitin from the E2 ubiquitin-conjugating enzyme UBE2D1 in the form of a thioester and then directly transfers the ubiquitin to targeted substrates. Associates with the proteasome and promotes elongation of ubiquitin chains on substrates bound to the 26S proteasome. Also catalyzes 'Lys-29'- and 'Lys-48'-linked ubiquitination of 26S proteasome subunit ADRM1/RPN13 in response to proteotoxic stress, impairing the ability of the proteasome to bind and degrade ubiquitin-conjugated proteins. Acts as a negative regulator of autophagy by mediating 'Lys-29'- and 'Lys-48'-linked ubiquitination of PIK3C3/VPS34, promoting its degradation. Can assemble unanchored poly-ubiquitin chains in either 'Lys-29'- or 'Lys-48'-linked polyubiquitin chains; with some preference for 'Lys-48' linkages. Acts as a negative regulator of type I interferon by mediating 'Lys-48'-linked ubiquitination of IRF3 and IRF7, leading to their degradation by the proteasome. Catalyzes ubiquitination and degradation of CAND2. The polypeptide is Ubiquitin-protein ligase E3C (Homo sapiens (Human)).